The sequence spans 283 residues: Nucleotide-binding protein ABBFA_002973 (283 aa).

Residue 9–16 coordinates ATP; sequence GQSGSGKS. 59 to 62 lines the GTP pocket; the sequence is DVRS.

This sequence belongs to the RapZ-like family.

Its function is as follows. Displays ATPase and GTPase activities. The polypeptide is Nucleotide-binding protein ABBFA_002973 (Acinetobacter baumannii (strain AB307-0294)).